Consider the following 443-residue polypeptide: Probable D-serine dehydratase (443 aa).

Lys-106 bears the N6-(pyridoxal phosphate)lysine mark.

Belongs to the serine/threonine dehydratase family. DsdA subfamily. It depends on pyridoxal 5'-phosphate as a cofactor.

The catalysed reaction is D-serine = pyruvate + NH4(+). The protein is Probable D-serine dehydratase of Cupriavidus pinatubonensis (strain JMP 134 / LMG 1197) (Cupriavidus necator (strain JMP 134)).